The sequence spans 338 residues: Heat-inducible transcription repressor HrcA (338 aa).

Belongs to the HrcA family.

In terms of biological role, negative regulator of class I heat shock genes (grpE-dnaK-dnaJ and groELS operons). Prevents heat-shock induction of these operons. The sequence is that of Heat-inducible transcription repressor HrcA from Bacillus cereus (strain AH820).